The sequence spans 37 residues: Esculentin-2B (37 aa).

A disulfide bridge links Cys31 with Cys37.

The protein belongs to the frog skin active peptide (FSAP) family. Esculentin subfamily. Expressed by the skin glands.

The protein localises to the secreted. Shows antibacterial activity against representative Gram-negative and Gram-positive bacterial species, and hemolytic activity. The polypeptide is Esculentin-2B (Pelophylax lessonae (Pool frog)).